A 237-amino-acid chain; its full sequence is Phosphoribosylaminoimidazole-succinocarboxamide synthase (237 aa).

This sequence belongs to the SAICAR synthetase family.

It carries out the reaction 5-amino-1-(5-phospho-D-ribosyl)imidazole-4-carboxylate + L-aspartate + ATP = (2S)-2-[5-amino-1-(5-phospho-beta-D-ribosyl)imidazole-4-carboxamido]succinate + ADP + phosphate + 2 H(+). It participates in purine metabolism; IMP biosynthesis via de novo pathway; 5-amino-1-(5-phospho-D-ribosyl)imidazole-4-carboxamide from 5-amino-1-(5-phospho-D-ribosyl)imidazole-4-carboxylate: step 1/2. The sequence is that of Phosphoribosylaminoimidazole-succinocarboxamide synthase from Fusobacterium nucleatum subsp. nucleatum (strain ATCC 25586 / DSM 15643 / BCRC 10681 / CIP 101130 / JCM 8532 / KCTC 2640 / LMG 13131 / VPI 4355).